Reading from the N-terminus, the 211-residue chain is Large ribosomal subunit protein uL3 (211 aa).

Residues 134–155 (ATHGNSLSHRAPGSIGQNQTPG) are disordered. Gln152 is subject to N5-methylglutamine.

It belongs to the universal ribosomal protein uL3 family. In terms of assembly, part of the 50S ribosomal subunit. Forms a cluster with proteins L14 and L19. In terms of processing, methylated by PrmB.

In terms of biological role, one of the primary rRNA binding proteins, it binds directly near the 3'-end of the 23S rRNA, where it nucleates assembly of the 50S subunit. The sequence is that of Large ribosomal subunit protein uL3 from Methylococcus capsulatus (strain ATCC 33009 / NCIMB 11132 / Bath).